Reading from the N-terminus, the 447-residue chain is GTPase Der (447 aa).

EngA-type G domains lie at 3–167 and 180–353; these read PVIA…ALPE and IRLA…KSAN. Residues 9–16, 56–60, 119–122, 186–193, 233–237, and 298–301 contribute to the GTP site; these read GRPNVGKS, DTGGF, NKAE, DTAGL, and NKWD. Positions 354–438 constitute a KH-like domain; the sequence is RKMPTPVLTR…PLRIEMKTSS (85 aa).

The protein belongs to the TRAFAC class TrmE-Era-EngA-EngB-Septin-like GTPase superfamily. EngA (Der) GTPase family. In terms of assembly, associates with the 50S ribosomal subunit.

Its function is as follows. GTPase that plays an essential role in the late steps of ribosome biogenesis. This Acidovorax ebreus (strain TPSY) (Diaphorobacter sp. (strain TPSY)) protein is GTPase Der.